The following is a 63-amino-acid chain: UPF0337 protein SERP0494 (63 aa).

A disordered region spans residues 1–46 (MAEDKFEQAKGNIKETVGNATDNKELEKDGKGDKASGKAKEAVENV). Basic and acidic residues predominate over residues 22 to 46 (DNKELEKDGKGDKASGKAKEAVENV).

It belongs to the UPF0337 (CsbD) family.

The polypeptide is UPF0337 protein SERP0494 (Staphylococcus epidermidis (strain ATCC 35984 / DSM 28319 / BCRC 17069 / CCUG 31568 / BM 3577 / RP62A)).